A 190-amino-acid polypeptide reads, in one-letter code: Histone-arginine methyltransferase METTL23 (190 aa).

It belongs to the methyltransferase superfamily. METTL23 family. As to quaternary structure, interacts with HSPA5, HSP90B1, TUBULIN, UGGT1 and UGGT2. Interacts with TET3. Interacts with STPG4.

It localises to the nucleus. The protein resides in the cytoplasm. It catalyses the reaction L-arginyl-[protein] + 2 S-adenosyl-L-methionine = N(omega),N(omega)-dimethyl-L-arginyl-[protein] + 2 S-adenosyl-L-homocysteine + 2 H(+). Its function is as follows. Histone methyltransferase that dimethylates histone H3 at 'Arg-17', forming asymmetric dimethylarginine (H3R17me2a), leading to activate transcription via chromatin remodeling. Maternal factor involved in epigenetic chromatin reprogramming of the paternal genome in the zygote: mediates H3R17me2a, promoting histone H3.3 incorporation in the male pronucleus, leading to TET3 recruitment and subsequent DNA demethylation. The polypeptide is Histone-arginine methyltransferase METTL23 (Homo sapiens (Human)).